The chain runs to 320 residues: Acetyl-coenzyme A carboxylase carboxyl transferase subunit alpha (320 aa).

In terms of domain architecture, CoA carboxyltransferase C-terminal spans 39-293 (ALDAKAAKLL…RGAIAAMLKE (255 aa)).

Belongs to the AccA family. Acetyl-CoA carboxylase is a heterohexamer composed of biotin carboxyl carrier protein (AccB), biotin carboxylase (AccC) and two subunits each of ACCase subunit alpha (AccA) and ACCase subunit beta (AccD).

It localises to the cytoplasm. It carries out the reaction N(6)-carboxybiotinyl-L-lysyl-[protein] + acetyl-CoA = N(6)-biotinyl-L-lysyl-[protein] + malonyl-CoA. Its pathway is lipid metabolism; malonyl-CoA biosynthesis; malonyl-CoA from acetyl-CoA: step 1/1. Component of the acetyl coenzyme A carboxylase (ACC) complex. First, biotin carboxylase catalyzes the carboxylation of biotin on its carrier protein (BCCP) and then the CO(2) group is transferred by the carboxyltransferase to acetyl-CoA to form malonyl-CoA. This chain is Acetyl-coenzyme A carboxylase carboxyl transferase subunit alpha, found in Ruegeria pomeroyi (strain ATCC 700808 / DSM 15171 / DSS-3) (Silicibacter pomeroyi).